The following is a 508-amino-acid chain: Cytochrome P450 monooxygenase lepD (508 aa).

The helical transmembrane segment at 22 to 42 threads the bilayer; it reads IAAAVAVVASIVIYLALSSFF. 2 N-linked (GlcNAc...) asparagine glycosylation sites follow: N53 and N416. C454 lines the heme pocket.

It belongs to the cytochrome P450 family. Heme is required as a cofactor.

It localises to the membrane. Functionally, cytochrome P450 monooxygenase; part of the gene cluster 23 that mediates the biosynthesis of a family of 2-pyridones known as leporins. The hybrid PKS-NRPS synthetase lepA and the enoyl reductase lepG are responsible for fusion of phenylalanine with a hexaketide and subsequent release of the stable tetramic acid precursor, pre-leporin C. Because lepA lacks a designated enoylreductase (ER) domain, the required activity is provided the enoyl reductase lepG. It is possible that the dehydrogenase lepF also participates in production of pre-leporin C. Cytochrome P450 monooxygenase lepH is then required for the ring expansion step to yield leporin C. Leporin C is then presumably further oxidized by the N-hydroxylase lepD to form leporin B. LepI may possess a function in biosynthesis upstream of lepA. Leporin B is further oxidized in the presence of ferric ion to give the leporin B trimer-iron chelate, but whether or not this reaction is catalyzed by an enzyme in the pathway or by ferric ion is not determined yet. This Aspergillus flavus (strain ATCC 200026 / FGSC A1120 / IAM 13836 / NRRL 3357 / JCM 12722 / SRRC 167) protein is Cytochrome P450 monooxygenase lepD.